We begin with the raw amino-acid sequence, 544 residues long: CTP synthase (544 aa).

The tract at residues 1-265 is amidoligase domain; the sequence is MARFIFITGG…DKAVLSAFGL (265 aa). CTP is bound at residue Ser13. Ser13 provides a ligand contact to UTP. Residue 14–19 participates in ATP binding; the sequence is SLGKGL. Residue Tyr54 coordinates L-glutamine. Residue Asp71 coordinates ATP. Asp71 and Glu139 together coordinate Mg(2+). CTP contacts are provided by residues 146–148, 186–191, and Lys222; these read DIE and KTKPTQ. UTP contacts are provided by residues 186–191 and Lys222; that span reads KTKPTQ. The 253-residue stretch at 291-543 folds into the Glutamine amidotransferase type-1 domain; that stretch reads TIGVVGKYVG…VAAALKQSRL (253 aa). Gly355 contacts L-glutamine. The Nucleophile; for glutamine hydrolysis role is filled by Cys382. L-glutamine is bound by residues 383-386, Glu406, and Arg471; that span reads LGMQ. Catalysis depends on residues His516 and Glu518.

Belongs to the CTP synthase family. In terms of assembly, homotetramer.

It carries out the reaction UTP + L-glutamine + ATP + H2O = CTP + L-glutamate + ADP + phosphate + 2 H(+). The enzyme catalyses L-glutamine + H2O = L-glutamate + NH4(+). It catalyses the reaction UTP + NH4(+) + ATP = CTP + ADP + phosphate + 2 H(+). It functions in the pathway pyrimidine metabolism; CTP biosynthesis via de novo pathway; CTP from UDP: step 2/2. Its activity is regulated as follows. Allosterically activated by GTP, when glutamine is the substrate; GTP has no effect on the reaction when ammonia is the substrate. The allosteric effector GTP functions by stabilizing the protein conformation that binds the tetrahedral intermediate(s) formed during glutamine hydrolysis. Inhibited by the product CTP, via allosteric rather than competitive inhibition. Catalyzes the ATP-dependent amination of UTP to CTP with either L-glutamine or ammonia as the source of nitrogen. Regulates intracellular CTP levels through interactions with the four ribonucleotide triphosphates. The chain is CTP synthase from Zymomonas mobilis subsp. mobilis (strain ATCC 31821 / ZM4 / CP4).